The chain runs to 324 residues: Tetrahydromethanopterin:alpha-L-glutamate ligase (324 aa).

The ATP-grasp domain occupies 113–321 (SYLLARAGLP…PAEYILEYLQ (209 aa)). Residues lysine 148, 195 to 204 (QEFIENPGRD), and arginine 220 each bind ATP. Aspartate 265 lines the Mg(2+) pocket. Position 265 (aspartate 265) interacts with Mn(2+). Positions 274–293 (TGNENKKTEDKSTGQGSRIL) are disordered. The Mg(2+) site is built by glutamate 294 and asparagine 296. Mn(2+) is bound by residues glutamate 294 and asparagine 296.

The protein belongs to the RimK family. MptN subfamily. Homodimer. The cofactor is Mg(2+). Mn(2+) is required as a cofactor.

It catalyses the reaction 5,6,7,8-tetrahydromethanopterin + L-glutamate + ATP = 5,6,7,8-tetrahydrosarcinapterin + ADP + phosphate + H(+). Its pathway is cofactor biosynthesis; 5,6,7,8-tetrahydrosarcinapterin biosynthesis. Functionally, catalyzes the ATP or GTP-dependent addition of one L-glutamate molecule to tetrahydromethanopterin, producing tetrahydrosarcinapterin. In Methanosarcina acetivorans (strain ATCC 35395 / DSM 2834 / JCM 12185 / C2A), this protein is Tetrahydromethanopterin:alpha-L-glutamate ligase (mptN).